The sequence spans 215 residues: ATP-dependent dethiobiotin synthetase BioD (215 aa).

13–18 (DIGKTV) is a binding site for ATP. Thr-17 contacts Mg(2+). Lys-38 is an active-site residue. Thr-42 serves as a coordination point for substrate. ATP is bound by residues Asp-50, 115–118 (EGAG), and 175–176 (NH). Residues Asp-50 and Glu-115 each coordinate Mg(2+).

This sequence belongs to the dethiobiotin synthetase family. As to quaternary structure, homodimer. Requires Mg(2+) as cofactor.

It is found in the cytoplasm. The enzyme catalyses (7R,8S)-7,8-diammoniononanoate + CO2 + ATP = (4R,5S)-dethiobiotin + ADP + phosphate + 3 H(+). Its pathway is cofactor biosynthesis; biotin biosynthesis; biotin from 7,8-diaminononanoate: step 1/2. Catalyzes a mechanistically unusual reaction, the ATP-dependent insertion of CO2 between the N7 and N8 nitrogen atoms of 7,8-diaminopelargonic acid (DAPA, also called 7,8-diammoniononanoate) to form a ureido ring. This is ATP-dependent dethiobiotin synthetase BioD from Neisseria gonorrhoeae (strain NCCP11945).